A 317-amino-acid polypeptide reads, in one-letter code: Urease accessory protein 6 (317 aa).

It belongs to the UreF family. URE4, URE6 and URE7 may form a complex that acts as a GTP-hydrolysis-dependent molecular chaperone, activating the urease apoprotein URE1.

Its function is as follows. Urease accessory protein required for the maturation and activation of urease via the functional incorporation of the urease nickel metallocenter. Plays a role in host brain invasion. The polypeptide is Urease accessory protein 6 (Cryptococcus neoformans var. grubii serotype A (strain H99 / ATCC 208821 / CBS 10515 / FGSC 9487) (Filobasidiella neoformans var. grubii)).